The chain runs to 1452 residues: Arf-GAP with Rho-GAP domain, ANK repeat and PH domain-containing protein 1 (1452 aa).

An SAM domain is found at 6 to 70 (DAALSVAEWL…LAGLHRAHAP (65 aa)). The interval 81-90 (PVPMKRHIFR) is required for interaction with SH3KBP1. Disordered stretches follow at residues 87–258 (HIFR…LPSR) and 271–304 (EGEE…LNPP). Composition is skewed to pro residues over residues 92 to 104 (PPVP…PPPT), 154 to 167 (SVPP…PPYP), and 205 to 225 (PLQP…PPRL). Composition is skewed to acidic residues over residues 228 to 239 (EFDDSDYDDVPE) and 271 to 286 (EGEE…DDDH). S232 is subject to Phosphoserine. A Phosphotyrosine; by PTK6 modification is found at Y234. Positions 329–421 (PVIKAGWLDK…WMQALQQAVV (93 aa)) constitute a PH 1 domain. S430 is modified (phosphoserine). The region spanning 442-531 (QPDRAGSLEL…WLEAMQGAIA (90 aa)) is the PH 2 domain. Y506 bears the Phosphotyrosine mark. Residues 537-662 (SEVAERIWAA…RYHPLFGNQE (126 aa)) form the Arf-GAP domain. The C4-type zinc finger occupies 552-575 (CADCGAAQPDWASINLCVVICKRC). At S740 the chain carries Phosphoserine. One can recognise a PH 3 domain in the interval 745 to 852 (TVSHSGFLYK…WVKCIAKAFV (108 aa)). The Rho-GAP domain occupies 956 to 1141 (ASLGDTLSEQ…DLINHYVVVF (186 aa)). The 90-residue stretch at 1174-1263 (GDFICTVYLE…SHLVVKKYQS (90 aa)) folds into the Ras-associating domain. The PH 4 domain maps to 1276–1398 (GDTKHGMMKF…WFATFLSVQH (123 aa)). Phosphoserine occurs at positions 1430 and 1437.

As to quaternary structure, interacts with SH3KBP1/CIN85 (via SH3 domains). The interaction is independent of EGF and does not affect ARAP1 GTPase-activating activity but is involved in regulating ubiquitination and endocytic trafficking of EGFR. ARAP1 competes with E3 ubiquitin-protein ligase CBL for binding to SH3KBP1, preventing interaction of CBL with SH3KBP1; this is likely to regulate SH3KBP1-mediated internalization of EGFR. Interacts with TNFRSF10A. Phosphorylated by PTK6 following EGF stimulation which enhances EGFR signaling by delaying EGFR down-regulation; the interaction is mediated by the SH2 domain of PTK6. Phosphorylation promotes association with the Golgi apparatus and endosomes. Expressed in the retina where it is detected in Mueller glia (at protein level). Also detected in the retinal pigment epithelium (at protein level). Expressed in osteoclasts (at protein level).

It is found in the cytoplasm. It localises to the golgi apparatus. Its subcellular location is the trans-Golgi network. The protein localises to the golgi stack membrane. The protein resides in the cell membrane. It is found in the endosome. It localises to the multivesicular body. Its subcellular location is the cell projection. The protein localises to the ruffle. The protein resides in the podosome. It is found in the early endosome. Phosphatidylinositol 3,4,5-trisphosphate-dependent GTPase-activating protein that modulates actin cytoskeleton remodeling by regulating ARF and RHO family members. Activated by phosphatidylinositol 3,4,5-trisphosphate (PtdIns(3,4,5)P3) binding and, to a lesser extent, by phosphatidylinositol 3,4-bisphosphate (PtdIns(3,4)P2) binding. Has a preference for ARF1 and ARF5. Positively regulates the ring size of circular dorsal ruffles and promotes macropinocytosis. Acts as a bridging factor in osteoclasts to control actin and membrane dynamics. Regulates the condensing of osteoclast podosomes into sealing zones which segregate the bone-facing membrane from other membrane domains and are required for osteoclast resorption activity. Also regulates recruitment of the AP-3 complex to endosomal membranes and trafficking of lysosomal membrane proteins to the ruffled membrane border of osteoclasts to modulate bone resorption. Regulates the endocytic trafficking of EGFR. Regulates the incorporation of CD63 and CD9 into multivesicular bodies. Required in the retinal pigment epithelium (RPE) for photoreceptor survival due to its role in promoting RPE phagocytosis. The chain is Arf-GAP with Rho-GAP domain, ANK repeat and PH domain-containing protein 1 from Mus musculus (Mouse).